The sequence spans 802 residues: Leucine--tRNA ligase (802 aa).

Positions 40 to 51 (PYPSGAGLHVGH) match the 'HIGH' region motif. A 'KMSKS' region motif is present at residues 576-580 (KMSKS). Residue Lys-579 participates in ATP binding.

The protein belongs to the class-I aminoacyl-tRNA synthetase family.

The protein resides in the cytoplasm. It catalyses the reaction tRNA(Leu) + L-leucine + ATP = L-leucyl-tRNA(Leu) + AMP + diphosphate. This is Leucine--tRNA ligase from Bacillus cytotoxicus (strain DSM 22905 / CIP 110041 / 391-98 / NVH 391-98).